We begin with the raw amino-acid sequence, 330 residues long: Phenylalanine--tRNA ligase alpha subunit (330 aa).

E246 lines the Mg(2+) pocket.

It belongs to the class-II aminoacyl-tRNA synthetase family. Phe-tRNA synthetase alpha subunit type 1 subfamily. In terms of assembly, tetramer of two alpha and two beta subunits. Mg(2+) is required as a cofactor.

The protein resides in the cytoplasm. It catalyses the reaction tRNA(Phe) + L-phenylalanine + ATP = L-phenylalanyl-tRNA(Phe) + AMP + diphosphate + H(+). This is Phenylalanine--tRNA ligase alpha subunit from Sulfurimonas denitrificans (strain ATCC 33889 / DSM 1251) (Thiomicrospira denitrificans (strain ATCC 33889 / DSM 1251)).